The following is a 280-amino-acid chain: 3-dehydroshikimate dehydratase (280 aa).

Residues Tyr-70, Arg-102, and Glu-142 each coordinate substrate. Mn(2+) is bound at residue Glu-142. His-144 (proton acceptor) is an active-site residue. Substrate is bound by residues Asp-172 and His-175. Asp-172 contacts Mn(2+). Mn(2+) is bound at residue His-198. Residues Tyr-217 and Glu-253 each coordinate substrate. Residue Glu-253 coordinates Mn(2+).

As to quaternary structure, homodimer. Mn(2+) is required as a cofactor.

The catalysed reaction is 3-dehydroshikimate = 3,4-dihydroxybenzoate + H2O. Its pathway is aromatic compound metabolism; 3,4-dihydroxybenzoate biosynthesis; 3,4-dihydroxybenzoate from 3-dehydroquinate: step 2/2. It participates in siderophore biosynthesis; petrobactin biosynthesis. Its function is as follows. Involved in the biosynthesis of petrobactin, a catecholate siderophore that functions in both iron acquisition and virulence. Catalyzes the conversion of 3-dehydroshikimate to 3,4-dihydroxybenzoate (3,4-DHBA). This chain is 3-dehydroshikimate dehydratase, found in Bacillus anthracis.